A 652-amino-acid chain; its full sequence is Serine/threonine-protein kinase ssp1 (652 aa).

Tyr58 is subject to Phosphotyrosine. Ser59 is subject to Phosphoserine. At Tyr63 the chain carries Phosphotyrosine. A Protein kinase domain is found at 135–409; sequence YEIIKELGRG…LVEVKLHPWT (275 aa). ATP contacts are provided by residues 141–149 and Lys164; that span reads LGRGMHGKV. Asp267 functions as the Proton acceptor in the catalytic mechanism. 2 disordered regions span residues 467-491 and 506-529; these read DSSS…SIGL and NESQ…SSEK. Positions 508–518 are enriched in basic and acidic residues; that stretch reads SQKDRERKQVH.

Belongs to the protein kinase superfamily. Ser/Thr protein kinase family.

The protein resides in the cytoplasm. It carries out the reaction L-seryl-[protein] + ATP = O-phospho-L-seryl-[protein] + ADP + H(+). The enzyme catalyses L-threonyl-[protein] + ATP = O-phospho-L-threonyl-[protein] + ADP + H(+). Involved in actin localization and thus in polarized cell growth. This Schizosaccharomyces pombe (strain 972 / ATCC 24843) (Fission yeast) protein is Serine/threonine-protein kinase ssp1 (ssp1).